The sequence spans 132 residues: T-cell receptor alpha chain V region 2B4 (132 aa).

Positions 1-20 (MKSLSVSLVVLWLLLNWVNS) are cleaved as a signal peptide. The interval 21 to 113 (QQNVQQSPES…SALYLCAVTL (93 aa)) is v segment. The N-linked (GlcNAc...) asparagine glycan is linked to asparagine 42. Residues 114–117 (YGGS) form a d segment region. A j segment region spans residues 118–132 (GNKLIFGTGTLLSVK).

The sequence is that of T-cell receptor alpha chain V region 2B4 from Mus musculus (Mouse).